A 602-amino-acid chain; its full sequence is UvrABC system protein C (602 aa).

In terms of domain architecture, GIY-YIG spans 15–92 (DLPGSYQMKD…IQKYQPYYNI (78 aa)). Residues 197 to 232 (GKAKASLTAKMERAAKNLQFERAAEIRDQLHYIEQT) form the UVR domain.

This sequence belongs to the UvrC family. In terms of assembly, interacts with UvrB in an incision complex.

It localises to the cytoplasm. Functionally, the UvrABC repair system catalyzes the recognition and processing of DNA lesions. UvrC both incises the 5' and 3' sides of the lesion. The N-terminal half is responsible for the 3' incision and the C-terminal half is responsible for the 5' incision. The chain is UvrABC system protein C from Lacticaseibacillus paracasei (strain ATCC 334 / BCRC 17002 / CCUG 31169 / CIP 107868 / KCTC 3260 / NRRL B-441) (Lactobacillus paracasei).